The chain runs to 848 residues: Protein SEY1 (848 aa).

Topologically, residues 1–733 are cytoplasmic; the sequence is MNGNFAAVGS…KRGALGGMTQ (733 aa). In terms of domain architecture, GB1/RHD3-type G spans 47–277; sequence GFNYHLISVF…FVGGVFLPEY (231 aa). 57–64 serves as a coordination point for GTP; it reads GSQSTGKS. A helical transmembrane segment spans residues 734–754; it reads VPLYFWIALFAFGWNEIWMVI. Residues 755–757 are Lumenal-facing; it reads RNP. A helical membrane pass occupies residues 758 to 778; the sequence is FLFILLLLSAGGTYVAYNLSL. The Cytoplasmic segment spans residues 779 to 848; the sequence is LGPMMQMTNA…KKKDYDDDGI (70 aa). Positions 815–848 are disordered; the sequence is LAMPASSKSSGGEQVRMDTLDSKGKKKDYDDDGI. Basic and acidic residues predominate over residues 829–848; the sequence is VRMDTLDSKGKKKDYDDDGI.

It belongs to the TRAFAC class dynamin-like GTPase superfamily. GB1/RHD3 GTPase family. RHD3 subfamily.

It localises to the endoplasmic reticulum membrane. Functionally, cooperates with the reticulon proteins and tubule-shaping DP1 family proteins to generate and maintain the structure of the tubular endoplasmic reticulum network. Has GTPase activity, which is required for its function in ER organization. The sequence is that of Protein SEY1 from Pyricularia oryzae (strain 70-15 / ATCC MYA-4617 / FGSC 8958) (Rice blast fungus).